We begin with the raw amino-acid sequence, 89 residues long: Histone H3.v2 (89 aa).

The protein belongs to the histone H3 family.

This Dictyostelium discoideum (Social amoeba) protein is Histone H3.v2 (H3v2).